The sequence spans 406 residues: Cysteine desulfurase IscS (406 aa).

Pyridoxal 5'-phosphate-binding positions include 75 to 76 (AT), N155, Q183, and 203 to 205 (SSH). The residue at position 206 (K206) is an N6-(pyridoxal phosphate)lysine. Pyridoxal 5'-phosphate is bound at residue T243. C330 serves as the catalytic Cysteine persulfide intermediate. A [2Fe-2S] cluster-binding site is contributed by C330.

The protein belongs to the class-V pyridoxal-phosphate-dependent aminotransferase family. NifS/IscS subfamily. In terms of assembly, homodimer. Forms a heterotetramer with IscU, interacts with other sulfur acceptors. It depends on pyridoxal 5'-phosphate as a cofactor.

Its subcellular location is the cytoplasm. The catalysed reaction is (sulfur carrier)-H + L-cysteine = (sulfur carrier)-SH + L-alanine. It functions in the pathway cofactor biosynthesis; iron-sulfur cluster biosynthesis. Functionally, master enzyme that delivers sulfur to a number of partners involved in Fe-S cluster assembly, tRNA modification or cofactor biosynthesis. Catalyzes the removal of elemental sulfur atoms from cysteine to produce alanine. Functions as a sulfur delivery protein for Fe-S cluster synthesis onto IscU, an Fe-S scaffold assembly protein, as well as other S acceptor proteins. This chain is Cysteine desulfurase IscS, found in Glaesserella parasuis serovar 5 (strain SH0165) (Haemophilus parasuis).